The following is an 89-amino-acid chain: Small ribosomal subunit protein uS15 (89 aa).

Over residues 1–10 (MSLDTTEKQE) the composition is skewed to basic and acidic residues. The interval 1 to 23 (MSLDTTEKQELINAHQTHATDTG) is disordered. A compositionally biased stretch (polar residues) spans 14 to 23 (AHQTHATDTG).

The protein belongs to the universal ribosomal protein uS15 family. Part of the 30S ribosomal subunit. Forms a bridge to the 50S subunit in the 70S ribosome, contacting the 23S rRNA.

Its function is as follows. One of the primary rRNA binding proteins, it binds directly to 16S rRNA where it helps nucleate assembly of the platform of the 30S subunit by binding and bridging several RNA helices of the 16S rRNA. Functionally, forms an intersubunit bridge (bridge B4) with the 23S rRNA of the 50S subunit in the ribosome. The sequence is that of Small ribosomal subunit protein uS15 from Synechococcus sp. (strain WH7803).